A 620-amino-acid chain; its full sequence is 1-deoxy-D-xylulose-5-phosphate synthase (620 aa).

Thiamine diphosphate contacts are provided by residues histidine 80 and 121 to 123 (GHS). Aspartate 152 lines the Mg(2+) pocket. Residues 153-154 (GA), asparagine 181, tyrosine 288, and glutamate 370 contribute to the thiamine diphosphate site. Asparagine 181 serves as a coordination point for Mg(2+).

This sequence belongs to the transketolase family. DXPS subfamily. As to quaternary structure, homodimer. It depends on Mg(2+) as a cofactor. Thiamine diphosphate serves as cofactor.

It catalyses the reaction D-glyceraldehyde 3-phosphate + pyruvate + H(+) = 1-deoxy-D-xylulose 5-phosphate + CO2. Its pathway is metabolic intermediate biosynthesis; 1-deoxy-D-xylulose 5-phosphate biosynthesis; 1-deoxy-D-xylulose 5-phosphate from D-glyceraldehyde 3-phosphate and pyruvate: step 1/1. Functionally, catalyzes the acyloin condensation reaction between C atoms 2 and 3 of pyruvate and glyceraldehyde 3-phosphate to yield 1-deoxy-D-xylulose-5-phosphate (DXP). This is 1-deoxy-D-xylulose-5-phosphate synthase from Salmonella agona (strain SL483).